Reading from the N-terminus, the 785-residue chain is Pre-rRNA-processing protein TSR1 homolog (785 aa).

The tract at residues 1–59 (MSTTGHRAGVFKKPSKPHKSWKGKRTKGEITSENRGREGVKQLTRSAHSTHRTISKDAR) is disordered. The span at 9-25 (GVFKKPSKPHKSWKGKR) shows a compositional bias: basic residues. Residues 26–40 (TKGEITSENRGREGV) are compositionally biased toward basic and acidic residues. Positions 83–243 (APCLVTVVSL…LRILNETKKK (161 aa)) constitute a Bms1-type G domain. Residues 307–426 (PHPLKAHNKT…GETTASEMMF (120 aa)) form a disordered region. Residues 376 to 409 (LDDEDDEDEEDSDEDMDDSDNEEVEDDSEEEEPM) show a composition bias toward acidic residues.

It belongs to the TRAFAC class translation factor GTPase superfamily. Bms1-like GTPase family. TSR1 subfamily.

Its subcellular location is the nucleus. The protein localises to the nucleolus. Its function is as follows. Required during maturation of the 40S ribosomal subunit in the nucleolus. This is Pre-rRNA-processing protein TSR1 homolog (tag-151) from Caenorhabditis elegans.